The following is a 178-amino-acid chain: Interleukin-10 (178 aa).

The N-terminal stretch at 1–18 (MPGSALLCCLALLAGVKA) is a signal peptide. Disulfide bonds link cysteine 30-cysteine 126 and cysteine 80-cysteine 132. A glycan (N-linked (GlcNAc...) asparagine) is linked at asparagine 67. An N-linked (GlcNAc...) asparagine glycan is attached at asparagine 134.

Belongs to the IL-10 family. As to quaternary structure, homodimer. Interacts with IL10RA and IL10RB.

Its subcellular location is the secreted. In terms of biological role, major immune regulatory cytokine that acts on many cells of the immune system where it has profound anti-inflammatory functions, limiting excessive tissue disruption caused by inflammation. Mechanistically, IL10 binds to its heterotetrameric receptor comprising IL10RA and IL10RB leading to JAK1 and STAT2-mediated phosphorylation of STAT3. In turn, STAT3 translocates to the nucleus where it drives expression of anti-inflammatory mediators. Targets antigen-presenting cells (APCs) such as macrophages and monocytes and inhibits their release of pro-inflammatory cytokines including granulocyte-macrophage colony-stimulating factor /GM-CSF, granulocyte colony-stimulating factor/G-CSF, IL-1 alpha, IL-1 beta, IL-6, IL-8 and TNF-alpha. Also interferes with antigen presentation by reducing the expression of MHC-class II and co-stimulatory molecules, thereby inhibiting their ability to induce T cell activation. In addition, controls the inflammatory response of macrophages by reprogramming essential metabolic pathways including mTOR signaling. This is Interleukin-10 (IL10) from Cavia porcellus (Guinea pig).